A 165-amino-acid polypeptide reads, in one-letter code: Dihydrofolate reductase (165 aa).

One can recognise a DHFR domain in the interval 3 to 165; that stretch reads VVGLIWAQST…RYRLHSYHRS (163 aa). Residue 7–9 coordinates substrate; it reads IWA. Residues 8–9 and 16–21 contribute to the NADP(+) site; these read WA and IGRDGG. Position 29 (Asp-29) interacts with substrate. 45 to 48 provides a ligand contact to NADP(+); the sequence is GRRT. Residue Arg-62 coordinates substrate. NADP(+)-binding positions include 67 to 70 and 100 to 105; these read LSRQ and IGGEQI. Substrate is bound at residue Thr-119.

Belongs to the dihydrofolate reductase family.

It carries out the reaction (6S)-5,6,7,8-tetrahydrofolate + NADP(+) = 7,8-dihydrofolate + NADPH + H(+). It functions in the pathway cofactor biosynthesis; tetrahydrofolate biosynthesis; 5,6,7,8-tetrahydrofolate from 7,8-dihydrofolate: step 1/1. Functionally, key enzyme in folate metabolism. Catalyzes an essential reaction for de novo glycine and purine synthesis, and for DNA precursor synthesis. This is Dihydrofolate reductase (folA) from Mycobacterium leprae (strain TN).